Consider the following 214-residue polypeptide: Urease accessory protein UreF (214 aa).

The protein belongs to the UreF family. As to quaternary structure, ureD, UreF and UreG form a complex that acts as a GTP-hydrolysis-dependent molecular chaperone, activating the urease apoprotein by helping to assemble the nickel containing metallocenter of UreC. The UreE protein probably delivers the nickel.

It localises to the cytoplasm. Functionally, required for maturation of urease via the functional incorporation of the urease nickel metallocenter. The polypeptide is Urease accessory protein UreF (Ruegeria sp. (strain TM1040) (Silicibacter sp.)).